Consider the following 280-residue polypeptide: Probable endonuclease 4 (280 aa).

His77, His117, Glu148, Asp180, His183, His215, Asp228, His230, and Glu259 together coordinate Zn(2+).

Belongs to the AP endonuclease 2 family. Requires Zn(2+) as cofactor.

It catalyses the reaction Endonucleolytic cleavage to 5'-phosphooligonucleotide end-products.. Functionally, endonuclease IV plays a role in DNA repair. It cleaves phosphodiester bonds at apurinic or apyrimidinic (AP) sites, generating a 3'-hydroxyl group and a 5'-terminal sugar phosphate. This is Probable endonuclease 4 from Thermoplasma volcanium (strain ATCC 51530 / DSM 4299 / JCM 9571 / NBRC 15438 / GSS1).